Reading from the N-terminus, the 166-residue chain is Ubiquitin-conjugating enzyme E2 7 (166 aa).

Ala2 bears the N-acetylalanine mark. The 161-residue stretch at Gln4–Glu164 folds into the UBC core domain. The active-site Glycyl thioester intermediate is the Cys89.

It belongs to the ubiquitin-conjugating enzyme family.

The enzyme catalyses S-ubiquitinyl-[E1 ubiquitin-activating enzyme]-L-cysteine + [E2 ubiquitin-conjugating enzyme]-L-cysteine = [E1 ubiquitin-activating enzyme]-L-cysteine + S-ubiquitinyl-[E2 ubiquitin-conjugating enzyme]-L-cysteine.. Its pathway is protein modification; protein ubiquitination. In terms of biological role, accepts the ubiquitin from the E1 complex and catalyzes its covalent attachment to other proteins. Involved in the formation of multiubiquitin chains. Signal the protein for selective degradation. The sequence is that of Ubiquitin-conjugating enzyme E2 7 (UBC7) from Arabidopsis thaliana (Mouse-ear cress).